A 375-amino-acid chain; its full sequence is Alcohol dehydrogenase class-3 chain L (375 aa).

At alanine 1 the chain carries N-acetylalanine. Residues cysteine 46, histidine 68, cysteine 98, cysteine 101, cysteine 104, cysteine 112, and cysteine 175 each coordinate Zn(2+).

It belongs to the zinc-containing alcohol dehydrogenase family. Class-III subfamily. Homodimer or heterodimer with H chain. Requires Zn(2+) as cofactor.

It localises to the cytoplasm. It carries out the reaction a primary alcohol + NAD(+) = an aldehyde + NADH + H(+). The catalysed reaction is a secondary alcohol + NAD(+) = a ketone + NADH + H(+). It catalyses the reaction S-(hydroxymethyl)glutathione + NADP(+) = S-formylglutathione + NADPH + H(+). The enzyme catalyses S-(hydroxymethyl)glutathione + NAD(+) = S-formylglutathione + NADH + H(+). Its function is as follows. Class-III ADH is remarkably ineffective in oxidizing ethanol, but it readily catalyzes the oxidation of long-chain primary alcohols and the oxidation of S-(hydroxymethyl) glutathione. The polypeptide is Alcohol dehydrogenase class-3 chain L (Gadus morhua (Atlantic cod)).